We begin with the raw amino-acid sequence, 415 residues long: Beta-1,4-glucuronyltransferase 1 (415 aa).

Topologically, residues 1-8 (MQMSYAIR) are cytoplasmic. Residues 9–36 (CAFYQLLLAALMLVAMLQLLYLSLLSGL) form a helical; Signal-anchor for type II membrane protein membrane-spanning segment. The Lumenal portion of the chain corresponds to 37–415 (HGQEEQEQYF…ARYPNSPHRC (379 aa)). Asn204 is a glycosylation site (N-linked (GlcNAc...) asparagine). Asp227 and Asp229 together coordinate Mn(2+). A glycan (N-linked (GlcNAc...) asparagine) is linked at Asn300.

The protein belongs to the glycosyltransferase 49 family. In terms of assembly, interacts with LARGE1 and LARGE2. Mn(2+) serves as cofactor.

The protein resides in the golgi apparatus membrane. It carries out the reaction 3-O-[beta-D-Xyl-(1-&gt;4)-Rib-ol-P-Rib-ol-P-3-beta-D-GalNAc-(1-&gt;3)-beta-D-GlcNAc-(1-&gt;4)-(O-6-P-alpha-D-Man)]-Thr-[protein] + UDP-alpha-D-glucuronate = 3-O-[beta-D-GlcA-(1-&gt;3)-beta-D-Xyl-(1-&gt;4)-Rib-ol-P-Rib-ol-P-3-beta-D-GalNAc-(1-&gt;3)-beta-D-GlcNAc-(1-&gt;4)-(O-6-P-alpha-D-Man)]-Thr-[protein] + UDP + H(+). It functions in the pathway protein modification; protein glycosylation. Its function is as follows. Beta-1,4-glucuronyltransferase involved in O-mannosylation of alpha-dystroglycan (DAG1). Transfers a glucuronic acid (GlcA) residue onto a xylose (Xyl) acceptor to produce the glucuronyl-beta-1,4-xylose-beta disaccharide primer, which is further elongated by LARGE1, during synthesis of phosphorylated O-mannosyl glycan. Phosphorylated O-mannosyl glycan is a carbohydrate structure present in alpha-dystroglycan (DAG1), which is required for binding laminin G-like domain-containing extracellular proteins with high affinity. Required for axon guidance; via its function in O-mannosylation of alpha-dystroglycan (DAG1). This is Beta-1,4-glucuronyltransferase 1 from Mus musculus (Mouse).